The chain runs to 843 residues: MRVREMQRNWQHLGKWGLLFLGILIICNANATDDLWVTVYYGVPVWKEPTTTLFCASDAKAYDPEVHNVWATYACVPTDPNPQELVLGNVTENFNMWENNMVDQMHLDIISLWDQSLKPCVKSTPLCVTLNCTDVNITMSDINGTSLKEDQGEIKNCSFNVTTELKDKKRKQQALFYRLDVEPIKNSSNIYKLISCNMSTVTQACPKVSFDPIPIHYCAPAGYAILKCNDKRFNGTGPCEKVSTVQCTHGIRPVVSTQLLLNGSLAQEDIIIRSKNITDNTKNIIVQFNRSVIIDCRRPNNNTRKGIRIGPGQTFFATGEIIGDIRKAYCNINRTLWNETLKNVSGEFKKHFNFSVAFNSSSGGDVEITTHSFNCRGEFFYYNTSGLFNETEVANNTNENITLPCRIRQFVNMWQRIGRAMYAPPIEGEIQCTSNITGLLLTRDGSKDIDGKEILRPIGGDMRDNWRSELYKYKVVRIEPVGVAPTKAKRRVVQRAKRAVGMGAVLFGFLGAAGSTMGAAAITLTAQARQLLSGIVQQQSNLLKAIEAQQHLLQLTVWGIKQLQARILAVERYLKDQQLLGIWGCSGKLICTTNVRWNSSWSNKSYDDIWDNMTWMQWEKEIDNYTKTIYSLIEDAQNQQERNEQELLALDKWDSLWSWFSITNWLWYIKIFIMIVGGLIGLRIVFAVLSVVNRVRQGYSPLSLQTLIPNPRGPDRPGGIEEEGGEPDRDRSMRLVSGFLPLTWDDLRSLCSFSYRHLRDLLLIAARTVDRGVKGGWEALKYLWNLTQHWGRELKNSAISLFDTIAIAVAEGTDRIIEVLQRAGRAVLHIPRRIRQGAERFLL.

The N-terminal stretch at 1 to 33 (MRVREMQRNWQHLGKWGLLFLGILIICNANATD) is a signal peptide. An N-linked (GlcNAc...) asparagine; by host glycan is attached at asparagine 30. The Extracellular portion of the chain corresponds to 34–671 (DLWVTVYYGV…ITNWLWYIKI (638 aa)). A disulfide bond links cysteine 55 and cysteine 75. N-linked (GlcNAc...) asparagine; by host glycosylation is found at asparagine 89, asparagine 131, asparagine 136, asparagine 143, asparagine 156, asparagine 160, asparagine 186, asparagine 197, asparagine 234, asparagine 262, asparagine 276, asparagine 289, asparagine 301, asparagine 333, asparagine 338, asparagine 343, asparagine 353, and asparagine 359. 5 cysteine pairs are disulfide-bonded: cysteine 120/cysteine 205, cysteine 127/cysteine 196, cysteine 132/cysteine 157, cysteine 218/cysteine 247, and cysteine 228/cysteine 239. Positions 132–156 (CTDVNITMSDINGTSLKEDQGEIKN) are V1. A V2 region spans residues 157-196 (CSFNVTTELKDKKRKQQALFYRLDVEPIKNSSNIYKLISC). A V3 region spans residues 296–329 (CRRPNNNTRKGIRIGPGQTFFATGEIIGDIRKAY). A disulfide bridge links cysteine 296 with cysteine 330. Positions 361 to 371 (SSGGDVEITTH) are CD4-binding loop. An intrachain disulfide couples cysteine 375 to cysteine 432. The interval 382–405 (YNTSGLFNETEVANNTNENITLPC) is V4. N-linked (GlcNAc...) asparagine; by host glycosylation is found at asparagine 383, asparagine 389, asparagine 395, asparagine 400, and asparagine 435. 2 V5 regions span residues 448–458 (DIDGKEILRPI) and 450–458 (DGKEILRPI). Residues 499-519 (AVGMGAVLFGFLGAAGSTMGA) form a fusion peptide region. Positions 561 to 579 (KQLQARILAVERYLKDQQL) are immunosuppression. The cysteines at positions 585 and 591 are disulfide-linked. Asparagine 598, asparagine 603, asparagine 612, and asparagine 624 each carry an N-linked (GlcNAc...) asparagine; by host glycan. Residues 620-654 (KEIDNYTKTIYSLIEDAQNQQERNEQELLALDKWD) are a coiled coil. The interval 649–670 (ALDKWDSLWSWFSITNWLWYIK) is MPER; binding to GalCer. Residues 672-692 (FIMIVGGLIGLRIVFAVLSVV) traverse the membrane as a helical segment. Over 693-843 (NRVRQGYSPL…IRQGAERFLL (151 aa)) the chain is Cytoplasmic. Residues 699 to 702 (YSPL) carry the YXXL motif; contains endocytosis signal motif. Residues 709-731 (PNPRGPDRPGGIEEEGGEPDRDR) are disordered. Residue cysteine 751 is the site of S-palmitoyl cysteine; by host attachment. A Di-leucine internalization motif motif is present at residues 842 to 843 (LL).

It belongs to the HIV-1 env protein family. As to quaternary structure, the mature envelope protein (Env) consists of a homotrimer of non-covalently associated gp120-gp41 heterodimers. The resulting complex protrudes from the virus surface as a spike. There seems to be as few as 10 spikes on the average virion. Interacts with host CD4, CCR5 and CXCR4. Gp120 also interacts with the C-type lectins CD209/DC-SIGN and CLEC4M/DC-SIGNR (collectively referred to as DC-SIGN(R)). Gp120 and gp41 interact with GalCer. Gp120 interacts with host ITGA4/ITGB7 complex; on CD4+ T-cells, this interaction results in rapid activation of integrin ITGAL/LFA-1, which facilitates efficient cell-to-cell spreading of HIV-1. Gp120 interacts with cell-associated heparan sulfate; this interaction increases virus infectivity on permissive cells and may be involved in infection of CD4- cells. In terms of assembly, the mature envelope protein (Env) consists of a homotrimer of non-covalently associated gp120-gp41 heterodimers. The resulting complex protrudes from the virus surface as a spike. There seems to be as few as 10 spikes on the average virion. Highly glycosylated by host. The high number of glycan on the protein is reffered to as 'glycan shield' because it contributes to hide protein sequence from adaptive immune system. Post-translationally, palmitoylation of the transmembrane protein and of Env polyprotein (prior to its proteolytic cleavage) is essential for their association with host cell membrane lipid rafts. Palmitoylation is therefore required for envelope trafficking to classical lipid rafts, but not for viral replication. In terms of processing, specific enzymatic cleavages in vivo yield mature proteins. Envelope glycoproteins are synthesized as an inactive precursor that is heavily N-glycosylated and processed likely by host cell furin in the Golgi to yield the mature SU and TM proteins. The cleavage site between SU and TM requires the minimal sequence [KR]-X-[KR]-R. About 2 of the 9 disulfide bonds of gp41 are reduced by P4HB/PDI, following binding to CD4 receptor.

It is found in the virion membrane. It localises to the host cell membrane. The protein resides in the host endosome membrane. In terms of biological role, oligomerizes in the host endoplasmic reticulum into predominantly trimers. In a second time, gp160 transits in the host Golgi, where glycosylation is completed. The precursor is then proteolytically cleaved in the trans-Golgi and thereby activated by cellular furin or furin-like proteases to produce gp120 and gp41. Its function is as follows. Attaches the virus to the host lymphoid cell by binding to the primary receptor CD4. This interaction induces a structural rearrangement creating a high affinity binding site for a chemokine coreceptor like CXCR4 and/or CCR5. Acts as a ligand for CD209/DC-SIGN and CLEC4M/DC-SIGNR, which are respectively found on dendritic cells (DCs), and on endothelial cells of liver sinusoids and lymph node sinuses. These interactions allow capture of viral particles at mucosal surfaces by these cells and subsequent transmission to permissive cells. HIV subverts the migration properties of dendritic cells to gain access to CD4+ T-cells in lymph nodes. Virus transmission to permissive T-cells occurs either in trans (without DCs infection, through viral capture and transmission), or in cis (following DCs productive infection, through the usual CD4-gp120 interaction), thereby inducing a robust infection. In trans infection, bound virions remain infectious over days and it is proposed that they are not degraded, but protected in non-lysosomal acidic organelles within the DCs close to the cell membrane thus contributing to the viral infectious potential during DCs' migration from the periphery to the lymphoid tissues. On arrival at lymphoid tissues, intact virions recycle back to DCs' cell surface allowing virus transmission to CD4+ T-cells. Acts as a class I viral fusion protein. Under the current model, the protein has at least 3 conformational states: pre-fusion native state, pre-hairpin intermediate state, and post-fusion hairpin state. During fusion of viral and target intracellular membranes, the coiled coil regions (heptad repeats) assume a trimer-of-hairpins structure, positioning the fusion peptide in close proximity to the C-terminal region of the ectodomain. The formation of this structure appears to drive apposition and subsequent fusion of viral and target cell membranes. Complete fusion occurs in host cell endosomes and is dynamin-dependent, however some lipid transfer might occur at the plasma membrane. The virus undergoes clathrin-dependent internalization long before endosomal fusion, thus minimizing the surface exposure of conserved viral epitopes during fusion and reducing the efficacy of inhibitors targeting these epitopes. Membranes fusion leads to delivery of the nucleocapsid into the cytoplasm. This chain is Envelope glycoprotein gp160, found in Homo sapiens (Human).